Here is a 272-residue protein sequence, read N- to C-terminus: Phosphatidylglycerol--prolipoprotein diacylglyceryl transferase (272 aa).

4 consecutive transmembrane segments (helical) span residues I21–A41, Y60–Y80, G101–A121, and V131–G151. R152 contributes to the a 1,2-diacyl-sn-glycero-3-phospho-(1'-sn-glycerol) binding site. 3 helical membrane passes run P181–Y201, G209–F229, and L244–V264.

This sequence belongs to the Lgt family.

The protein resides in the cell inner membrane. It catalyses the reaction L-cysteinyl-[prolipoprotein] + a 1,2-diacyl-sn-glycero-3-phospho-(1'-sn-glycerol) = an S-1,2-diacyl-sn-glyceryl-L-cysteinyl-[prolipoprotein] + sn-glycerol 1-phosphate + H(+). It functions in the pathway protein modification; lipoprotein biosynthesis (diacylglyceryl transfer). Catalyzes the transfer of the diacylglyceryl group from phosphatidylglycerol to the sulfhydryl group of the N-terminal cysteine of a prolipoprotein, the first step in the formation of mature lipoproteins. This Aliarcobacter butzleri (strain RM4018) (Arcobacter butzleri) protein is Phosphatidylglycerol--prolipoprotein diacylglyceryl transferase.